The primary structure comprises 930 residues: Translation initiation factor IF-2 (930 aa).

The segment covering 50–67 has biased composition (low complexity); sequence FKPAAAPKVEAKPAAPKV. Disordered regions lie at residues 50-195 and 260-346; these read FKPA…PRID and EVVP…HELP. Composition is skewed to basic and acidic residues over residues 68-90 and 110-125; these read SAEKKTEKSEPAKPAVAKEEAKP and FKAEREARAKEQAERR. Residues 129–141 show a composition bias toward low complexity; that stretch reads KGNNRDQQQNGNR. 2 stretches are compositionally biased toward basic and acidic residues: residues 157 to 167 and 262 to 295; these read RDNRRFNDQAK and VPEKKEPAVDTRRKKQARPDKNRDDYDHEEDGPR. The segment covering 309 to 318 has biased composition (low complexity); it reads NQKNSNWNNN. Over residues 337-346 the composition is skewed to basic and acidic residues; the sequence is VTERKFHELP. A tr-type G domain is found at 432–599; sequence ERPPVVTIMG…TVLLVAEIQE (168 aa). A G1 region spans residues 441–448; it reads GHVDHGKT. 441–448 serves as a coordination point for GTP; that stretch reads GHVDHGKT. The interval 466–470 is G2; the sequence is GITQH. The segment at 487 to 490 is G3; sequence DTPG. Residues 487 to 491 and 541 to 544 each bind GTP; these read DTPGH and NKID. A G4 region spans residues 541–544; the sequence is NKID. Residues 577–579 are G5; the sequence is SAK.

It belongs to the TRAFAC class translation factor GTPase superfamily. Classic translation factor GTPase family. IF-2 subfamily.

Its subcellular location is the cytoplasm. Functionally, one of the essential components for the initiation of protein synthesis. Protects formylmethionyl-tRNA from spontaneous hydrolysis and promotes its binding to the 30S ribosomal subunits. Also involved in the hydrolysis of GTP during the formation of the 70S ribosomal complex. The chain is Translation initiation factor IF-2 from Streptococcus pneumoniae (strain ATCC BAA-255 / R6).